The primary structure comprises 230 residues: Urease accessory protein UreF (230 aa).

The protein belongs to the UreF family. In terms of assembly, ureD, UreF and UreG form a complex that acts as a GTP-hydrolysis-dependent molecular chaperone, activating the urease apoprotein by helping to assemble the nickel containing metallocenter of UreC. The UreE protein probably delivers the nickel.

The protein localises to the cytoplasm. Its function is as follows. Required for maturation of urease via the functional incorporation of the urease nickel metallocenter. This is Urease accessory protein UreF from Allorhizobium ampelinum (strain ATCC BAA-846 / DSM 112012 / S4) (Agrobacterium vitis (strain S4)).